The following is an 81-amino-acid chain: Probable antitoxin MazE2 (81 aa).

Forms a complex with cognate toxin MazF2.

Its function is as follows. Antitoxin component of a type II toxin-antitoxin (TA) system. In Mycobacterium tuberculosis (strain ATCC 25618 / H37Rv), this protein is Probable antitoxin MazE2 (mazE2).